The primary structure comprises 203 residues: Ras-related protein Rab-24 (203 aa).

Residue tyrosine 17 is modified to Phosphotyrosine. Residues glycine 19, lysine 20, threonine 21, and threonine 40 each contribute to the GTP site. Mg(2+) contacts are provided by threonine 21, threonine 40, and aspartate 63. Residues 30 to 45 are switch I; that stretch reads DRFLVGPYQNTIGAAF. The switch II stretch occupies residues 63-80; sequence DTAGSERYEAMSRIYYRG. Residues glycine 66, lysine 121, aspartate 123, and lysine 156 each coordinate GTP. Position 172 is a phosphotyrosine (tyrosine 172). Residues cysteine 200 and cysteine 201 are each lipidated (S-geranylgeranyl cysteine).

The protein belongs to the small GTPase superfamily. Rab family. Interacts with ZFYVE20. Does not interact with the GDP dissociation inhibitors ARHGDIA and ARHGDIB. It depends on Mg(2+) as a cofactor. In terms of processing, prenylated; prenylation is required for RAB24 localization to autophagosomes. Isoprenylation is inefficient compared to other Rab family members. Phosphorylated at Tyr-17 and Tyr-172. Cytosolic pool of RAB24 is more phosphorylated than the membrane-associated pool. As to expression, widely expressed, with highest expression in brain.

It is found in the cytoplasm. It localises to the cytosol. Its subcellular location is the membrane. The protein localises to the cytoplasmic vesicle. The protein resides in the autophagosome membrane. It is found in the perinuclear region. It localises to the cytoskeleton. Its subcellular location is the spindle. The catalysed reaction is GTP + H2O = GDP + phosphate + H(+). Its activity is regulated as follows. Regulated by guanine nucleotide exchange factors (GEFs) which promote the exchange of bound GDP for free GTP. Regulated by GTPase activating proteins (GAPs) which increase the GTP hydrolysis activity. Inhibited by GDP dissociation inhibitors (GDIs). Its function is as follows. The small GTPases Rab are key regulators of intracellular membrane trafficking, from the formation of transport vesicles to their fusion with membranes. Rabs cycle between an inactive GDP-bound form and an active GTP-bound form that is able to recruit to membranes different sets of downstream effectors directly responsible for vesicle formation, movement, tethering and fusion. RAB24 is an atypical RAB protein that presents low GTPase activity and thereby exists predominantly in the GTP-bound active state. RAB24 is required for the clearance of late autophagic vacuoles under basal conditions. It is not needed for starvation-induced autophagy. Involved in the modulation of meiotic apparatus assembly and meiotic progression during oocyte maturation, possibly through regulation of kinetochore-microtubule interaction. This is Ras-related protein Rab-24 from Mus musculus (Mouse).